Here is a 517-residue protein sequence, read N- to C-terminus: Glutamate--tRNA ligase (517 aa).

A 'HIGH' region motif is present at residues 14–24 (PSPTGPLHIGG). The 'KMSKS' region motif lies at 266–270 (KLSKR). Lysine 269 provides a ligand contact to ATP.

Belongs to the class-I aminoacyl-tRNA synthetase family. Glutamate--tRNA ligase type 1 subfamily. In terms of assembly, monomer.

Its subcellular location is the cytoplasm. The catalysed reaction is tRNA(Glu) + L-glutamate + ATP = L-glutamyl-tRNA(Glu) + AMP + diphosphate. Catalyzes the attachment of glutamate to tRNA(Glu) in a two-step reaction: glutamate is first activated by ATP to form Glu-AMP and then transferred to the acceptor end of tRNA(Glu). In Cytophaga hutchinsonii (strain ATCC 33406 / DSM 1761 / CIP 103989 / NBRC 15051 / NCIMB 9469 / D465), this protein is Glutamate--tRNA ligase.